Consider the following 312-residue polypeptide: MAVSTIFSQDSNSKRLLIAFAITTLFMVTEAIGGWLSGSLALLADAGHMLTDSAALFIALMAVHFSQRKPDPRHTFGYLRLTTLAAFVNAAALLLIVILIVWEAVHRFFSPHEVMGTPMLIIAIAGLLANIFCFWILHKGEEEKNINVRAAALHVLSDLLGSVGAMIAAIVILTTGWTPIDPILSVLVSVLILRSAWRLLKESFHELLEGAPQEIDINKLRKDLCTNIYEVRNIHHVHLWQVGEQRLMTLHAQVIPPLDHDALLQRIQDYLLHHYRISHATVQMEYQHCGTPDCGINQAAPADGHHRHHHHE.

A run of 6 helical transmembrane segments spans residues 16 to 36, 40 to 60, 81 to 101, 117 to 137, 153 to 173, and 177 to 197; these read LLIA…GGWL, LALL…FIAL, LTTL…ILIV, TPML…FWIL, LHVL…IVIL, and WTPI…RSAW.

Belongs to the cation diffusion facilitator (CDF) transporter (TC 2.A.4) family. SLC30A subfamily.

Its subcellular location is the cell inner membrane. Functionally, involved in zinc efflux across the cytoplasmic membrane, thus reducing zinc accumulation in the cytoplasm and rendering bacteria more resistant to zinc. It may contribute to zinc homeostasis at low concentrations of zinc. This chain is Zinc transporter ZitB, found in Yersinia pestis.